A 66-amino-acid polypeptide reads, in one-letter code: Large ribosomal subunit protein bL32 (66 aa).

Over residues 1-18 (MAIVPKRKTSKQRKHKRR) the composition is skewed to basic residues. The tract at residues 1-21 (MAIVPKRKTSKQRKHKRRTND) is disordered.

Belongs to the bacterial ribosomal protein bL32 family.

The sequence is that of Large ribosomal subunit protein bL32 from Mycoplasmopsis agalactiae (strain NCTC 10123 / CIP 59.7 / PG2) (Mycoplasma agalactiae).